Consider the following 445-residue polypeptide: Ribosomal protein uS12 methylthiotransferase RimO (445 aa).

Positions Pro-13–Pro-123 constitute an MTTase N-terminal domain. Residues Cys-22, Cys-58, Cys-87, Cys-154, Cys-158, and Cys-161 each coordinate [4Fe-4S] cluster. The region spanning Leu-140 to Gln-377 is the Radical SAM core domain. In terms of domain architecture, TRAM spans Ala-380–Ile-445.

Belongs to the methylthiotransferase family. RimO subfamily. The cofactor is [4Fe-4S] cluster.

Its subcellular location is the cytoplasm. The enzyme catalyses L-aspartate(89)-[ribosomal protein uS12]-hydrogen + (sulfur carrier)-SH + AH2 + 2 S-adenosyl-L-methionine = 3-methylsulfanyl-L-aspartate(89)-[ribosomal protein uS12]-hydrogen + (sulfur carrier)-H + 5'-deoxyadenosine + L-methionine + A + S-adenosyl-L-homocysteine + 2 H(+). In terms of biological role, catalyzes the methylthiolation of an aspartic acid residue of ribosomal protein uS12. The polypeptide is Ribosomal protein uS12 methylthiotransferase RimO (Nitrosomonas eutropha (strain DSM 101675 / C91 / Nm57)).